A 386-amino-acid polypeptide reads, in one-letter code: NADPH-dependent alkenal/one oxidoreductase, chloroplastic (386 aa).

It belongs to the zinc-containing alcohol dehydrogenase family. Quinone oxidoreductase subfamily.

It is found in the plastid. The protein resides in the chloroplast. Functionally, reduces the double bond in short-chain unsaturated carbonyls. Acts preferentially on alpha,beta-unsaturated ketones rather on alpha,beta-unsaturated aldehydes. Has no activity with (E)-2-hexenal and (E)-2-pentenal. Contributes to detoxify stromal reactive carbonyls produced under oxidative stress. The sequence is that of NADPH-dependent alkenal/one oxidoreductase, chloroplastic from Arabidopsis thaliana (Mouse-ear cress).